Here is a 503-residue protein sequence, read N- to C-terminus: ATP synthase subunit alpha, chloroplastic (503 aa).

Residue 170–177 (GDRQTGKT) coordinates ATP.

The protein belongs to the ATPase alpha/beta chains family. F-type ATPases have 2 components, CF(1) - the catalytic core - and CF(0) - the membrane proton channel. CF(1) has five subunits: alpha(3), beta(3), gamma(1), delta(1), epsilon(1). CF(0) has four main subunits: a, b, b' and c.

The protein localises to the plastid. Its subcellular location is the chloroplast thylakoid membrane. The catalysed reaction is ATP + H2O + 4 H(+)(in) = ADP + phosphate + 5 H(+)(out). Its function is as follows. Produces ATP from ADP in the presence of a proton gradient across the membrane. The alpha chain is a regulatory subunit. The sequence is that of ATP synthase subunit alpha, chloroplastic from Thalassiosira pseudonana (Marine diatom).